Reading from the N-terminus, the 1372-residue chain is DNA-directed RNA polymerase subunit beta (1372 aa).

Belongs to the RNA polymerase beta chain family. In terms of assembly, the RNAP catalytic core consists of 2 alpha, 1 beta, 1 beta' and 1 omega subunit. When a sigma factor is associated with the core the holoenzyme is formed, which can initiate transcription.

It catalyses the reaction RNA(n) + a ribonucleoside 5'-triphosphate = RNA(n+1) + diphosphate. DNA-dependent RNA polymerase catalyzes the transcription of DNA into RNA using the four ribonucleoside triphosphates as substrates. The chain is DNA-directed RNA polymerase subunit beta from Psychrobacter arcticus (strain DSM 17307 / VKM B-2377 / 273-4).